Reading from the N-terminus, the 52-residue chain is Ovomucoid (52 aa).

Residues 2–52 enclose the Kazal-like domain; sequence VDCSDYPKPVCTLEEMPLCGSDNKTYGNKCNFCNAVVDSNGTLTLSHFGKC. 3 disulfides stabilise this stretch: cysteine 4-cysteine 34, cysteine 12-cysteine 31, and cysteine 20-cysteine 52. Asparagine 41 carries an N-linked (GlcNAc...) asparagine glycan.

It is found in the secreted. The protein is Ovomucoid of Scythrops novaehollandiae (Channel-billed cuckoo).